Consider the following 1445-residue polypeptide: MGNLVIPLGKGRAGRVESGQRIPPPAPRPSVECTGDDIALQMEKMLFPLKSPSATWLSPSSTPWMMDFILTSVCGLVLLFLLLLYVHSDPPSPPPGRKRSSREPQRERSGRSRSRKISALKACRILLRELEETRDLNYLLESHLRKLAGEGSSHLPLGGDPLGDVCKPVPAKAHQPHGKCMQDPSPASLSPPAPPAPLASTLSPGPMTFSEPFGPHSTLSASGPPEPLLPLKCPATQPHVVFPPSPQPHGPLASSPPPPDSSLAGLQCGSTTCPVPQSSPLHNQVLPPPTRVISGLGCSSDPIWDLYCWREAATTWGLSTYSHGKSQPRHLPDHTSEASFWGDPTPKHMEVGGCTFIHPDVQKLLETLIAKRALMKMWQEKERKRADHPHMTSLGKEWDITTLNPFWNVSTQPQQLPRPQQVSDATTVGNHLQQKRSQLFWDLPSLNSESLATTVWVSRNPSSQNAHSVPLDKASTSLPGEPEVEASSQLSQAPPQPHHMAQPQHFTPAWPQSQPPPLAEIQTQAHLSPPVPSLGCSSPPQIRGCGASYPTSQERTQSVIPTGKEYLEWPLKKRPKWKRVLPSLLKKSQAVLSQPTAHLPQERPASWSPKSAPILPGVVTSPELPEHWWQGRNAIHQEQSCGPPSRLQASGDLLQPDGEFPGRPQSQAEDTQQALLPSQPSDFAGKGRKDVQKTGFRSSGRFSDKGCLGSKLGPDPSRDQGSGRTSVKALDEDKEAEGDLRRSWKYQSVSSTPRDPDKEHLENKLQIHLARKVGEIKEGWIPMPVRRSWLMAKCAVPKSDTHRKPGKLASWRGGKAHVNTSQELSFLHPCTQQILEVHLVRFCVRHSWGTDLQSLEPINVWSGEAQAPPFPQSTFTPWASWVSRVESVPKVPIFLGKRPQNGPGDNRTTSKSVPTVSGPLAAPPPEQEGVQRPPRGSQSADTHGRSEAFPTGHKGRGCSQPPTCSLVGRTWQSRTVLESGKPKPRLEGSMGSEMAGNEAWLESESMSPGDPCSSRALQVLSIGSQWARAEDALQALKVGEKPPTWEVTLGASVRASSGSVQEDLRSTGALGTTGNPSASSVCVAQDPEQLHLKAQVVSEIALIVQVDSEEQLPGRAPGILLQDGATGLCLPGRHMDMLTAADRLPTQAPLSTSQSVSGKNMTASQGPCALLWKGGDSPGQQEPGSPKAKAPQKSQKTLGCADKGEAHRRPRTGEQGHRSKGPRTSEASGRSHPAQAREIGDKQERKYNQLQLEKGQTPPESHFQRKISHHPQGLHPRKGGTRWEDVLQKGKPGADAFQSWGSGPPRQFMDCMADKAWTISRVVGQILVDKLGLQWGRGPSEVNRHKGDFRAQENVPSCCHRGHCHQERSREMRALACSPKATPKGHHCPVKNRGIRDRDSSWAPPPREPVSPAGPHHHRPRMASTSGGPHPQLQELMSAQRCLAS.

A helical membrane pass occupies residues 64 to 84; the sequence is WMMDFILTSVCGLVLLFLLLL. Disordered stretches follow at residues 90 to 115 and 169 to 262; these read PPSP…SRSR and VPAK…PDSS. The segment covering 101–110 has biased composition (basic and acidic residues); sequence SREPQRERSG. Residues 241-260 show a composition bias toward pro residues; it reads VFPPSPQPHGPLASSPPPPD. A glycan (N-linked (GlcNAc...) asparagine) is linked at Asn-408. Disordered stretches follow at residues 411-430, 460-557, 592-619, and 637-761; these read TQPQ…TVGN, NPSS…ERTQ, LSQP…PGVV, and QEQS…KEHL. Over residues 664 to 681 the composition is skewed to polar residues; that stretch reads PQSQAEDTQQALLPSQPS. N-linked (GlcNAc...) asparagine glycosylation is found at Asn-819, Asn-906, and Asn-1160. Disordered regions lie at residues 894–966, 1143–1242, 1254–1280, and 1378–1445; these read FLGK…TCSL, RLPT…IGDK, KGQT…RKGG, and SPKA…CLAS. Composition is skewed to polar residues over residues 906-915 and 1148-1165; these read NRTTSKSVPT and APLS…TASQ. Over residues 1202–1217 the composition is skewed to basic and acidic residues; the sequence is DKGEAHRRPRTGEQGH.

This sequence belongs to the SPATA31 family.

The protein resides in the membrane. Functionally, may play a role in spermatogenesis. The protein is Spermatogenesis-associated protein 31E1 (SPATA31E1) of Homo sapiens (Human).